A 206-amino-acid chain; its full sequence is MLMKGTTTVGVKFKNGVIVASDKRATSGTFVASKSAVKTLKITDYAVATISGLVADGQYLVNNVRTIADLYSLDTERPLSVRGIARILAFLLRRYRPYFLLAQLIVGGVDREGAHLFNVDPFGTLTEEDYLATGSGSPVAISVIESGYSPDMDRESALRLVISSMTAALSRDAATGDGIDVVVIDDRGVNFLSREEISDLVREVLR.

The propeptide at 1 to 5 is removed in mature form; by autocatalysis; sequence MLMKG. Residue Thr6 is the Nucleophile of the active site.

The protein belongs to the peptidase T1B family. The 20S proteasome core is composed of 14 alpha and 14 beta subunits that assemble into four stacked heptameric rings, resulting in a barrel-shaped structure. The two inner rings, each composed of seven catalytic beta subunits, are sandwiched by two outer rings, each composed of seven alpha subunits. The catalytic chamber with the active sites is on the inside of the barrel. Has a gated structure, the ends of the cylinder being occluded by the N-termini of the alpha-subunits. Is capped at one or both ends by the proteasome regulatory ATPase, PAN.

It localises to the cytoplasm. The enzyme catalyses Cleavage of peptide bonds with very broad specificity.. The formation of the proteasomal ATPase PAN-20S proteasome complex, via the docking of the C-termini of PAN into the intersubunit pockets in the alpha-rings, triggers opening of the gate for substrate entry. Interconversion between the open-gate and close-gate conformations leads to a dynamic regulation of the 20S proteasome proteolysis activity. Functionally, component of the proteasome core, a large protease complex with broad specificity involved in protein degradation. The protein is Proteasome subunit beta 1 of Korarchaeum cryptofilum (strain OPF8).